Consider the following 367-residue polypeptide: Peroxisome biogenesis protein 16 (367 aa).

A disordered region spans residues 135 to 173 (GGETPNEEKDSNQSESQNRAGNSGRNLGPHGLGNQNHHN). Over residues 147-159 (QSESQNRAGNSGR) the composition is skewed to polar residues. The next 2 helical transmembrane spans lie at 237–257 (ALFA…VLFI) and 264–284 (SWIP…LLAN).

This sequence belongs to the peroxin-16 family. As to quaternary structure, interacts with APEM9 (via both N- and C-terminus). In terms of processing, the detection of an additional immunorelated polypeptide of 52 kDa suggests a post-translational modification of PEX16. In terms of tissue distribution, expressed in roots, siliques, seeds, cotyledons, leaves and flowers. Low expression in leaves and roots.

The protein localises to the peroxisome membrane. The protein resides in the endoplasmic reticulum membrane. Its function is as follows. Involved in the formation of peroxisomes, lipid bodies and protein bodies. In Arabidopsis thaliana (Mouse-ear cress), this protein is Peroxisome biogenesis protein 16.